Here is a 375-residue protein sequence, read N- to C-terminus: Growth/differentiation factor 8 (375 aa).

The N-terminal stretch at 1 to 18 (MQKLQIFVYIYLFMLLVA) is a signal peptide. Positions 19–266 (GPVDLNENSE…VTDTPKRSRR (248 aa)) are excised as a propeptide. Residues asparagine 48 and asparagine 71 are each glycosylated (N-linked (GlcNAc...) asparagine). Disulfide bonds link cysteine 272-cysteine 282, cysteine 281-cysteine 340, cysteine 309-cysteine 372, and cysteine 313-cysteine 374.

The protein belongs to the TGF-beta family. In terms of assembly, homodimer; disulfide-linked. Interacts with WFIKKN2, leading to inhibit its activity. Interacts with FSTL3. Post-translationally, synthesized as large precursor molecule that undergoes proteolytic cleavage to generate an N-terminal propeptide and a disulfide linked C-terminal dimer, which is the biologically active molecule. The circulating form consists of a latent complex of the C-terminal dimer and other proteins, including its propeptide, which maintain the C-terminal dimer in a latent, inactive state. Ligand activation requires additional cleavage of the prodomain by a tolloid-like metalloproteinase.

It localises to the secreted. Acts specifically as a negative regulator of skeletal muscle growth. This is Growth/differentiation factor 8 (MSTN) from Capra ibex (Ibex).